The sequence spans 342 residues: MRITEGSAVIEVPEAYSGPGRRSPGFYNADQVLNRDLTIDLINEFGVEKVLDGFGGSGVRGIRISLETKAKVVIAEISPSSCEIIKQNIAINNAEADLIHDNFQCVSSHIAFDYIDVDPYGSPVPYLDAAIMNVRKGGYLGITATDQSTLTGSTLNKTRRRYGAYIVNDIYRHEMGIRTLIGYIARRAAAFDRYIEPQLSIWNHHYYRVFVKVGKGVNGADKMIENIGYLNKHTTIDNSFKDVNEGPVWLSNLNNAELLEKIRDPRVSKKIEMIKHDNRLLFVDLTDIARKTSLSLPPLAKVMDEIMKHGYEAHRTSFSPTGIKTDCPYAEVSEILKAYAKR.

Positions 1 to 336 (MRITEGSAVI…CPYAEVSEIL (336 aa)) constitute a Trm1 methyltransferase domain. S-adenosyl-L-methionine contacts are provided by arginine 35, arginine 60, and glutamate 76.

Belongs to the class I-like SAM-binding methyltransferase superfamily. Trm1 family.

The enzyme catalyses guanosine(26) in tRNA + 2 S-adenosyl-L-methionine = N(2)-dimethylguanosine(26) in tRNA + 2 S-adenosyl-L-homocysteine + 2 H(+). Functionally, dimethylates a single guanine residue at position 26 of a number of tRNAs using S-adenosyl-L-methionine as donor of the methyl groups. This chain is tRNA (guanine(26)-N(2))-dimethyltransferase, found in Thermoplasma volcanium (strain ATCC 51530 / DSM 4299 / JCM 9571 / NBRC 15438 / GSS1).